We begin with the raw amino-acid sequence, 632 residues long: MEEVDRILIHSLRSCGTEVPEDVQSIRQFNTELIVEAVVRCLRVINPSLGATLSHVLPPGMSARFRIGTSLAQACQDLGYPGEVGYQTFLYSSEPDIRALLIFLAEKLPRDSPEDAHQPAGKSALLQREIAATIKRQLSLPWLPSSCRICALRRSQNSCRLHRFHAQPLSLATDPTLKSIPDERKEYWQCYLPSVTSQLPHLPSVAASLLERNTSELSAKQEWDAEWKSQGLASRLSPEDYRSRKRQRLQKRIQEQLRQCAQLLAENHLPSSSSQDLTDMLKAFNLDGGSDQKKGSRFTRTQRFTYQQDPHTLKEQMQRAAEILPKKDAQDTDAEQQELSSLQEQIDSIEQEIRGLSESNKRLQLTVSQVEGEVNEMRQSCEEKEKIVRVKKRAVELLPDADNNLVKLQALVDASSHRMANLVGQWESHQVRLSEEYRELKRVQQEQEDESSRWMKDAKDLYEKIRGAADEAKRKEELYKQLLSEYESLPKEVSRAAYTQRILEIVSNIKKQKEEITKILSDTKELQKEINNLTGKVDRTFVVTDELVFKDAKKDEPVRKAYKYLAALHENCSQLIQTIEDTGTILREIRDLEEQIETETTKKTLSNLQKILEDYRAIKQENAQLLARIREA.

Belongs to the CCDC22 family.

The protein localises to the endosome. It is found in the cytoplasm. The protein resides in the cytoskeleton. Its subcellular location is the microtubule organizing center. It localises to the centrosome. In terms of biological role, may be involved in regulation of NF-kappa-B signaling. May be involved in copper-dependent atp7a trafficking between the trans-Golgi network and vesicles in the cell periphery. The sequence is that of Coiled-coil domain-containing protein 22 (ccdc22) from Xenopus tropicalis (Western clawed frog).